Reading from the N-terminus, the 122-residue chain is Small ribosomal subunit protein uS13 (122 aa).

A disordered region spans residues 97-122; sequence PVRGQRTHTNARTRKGPAKAIAGKKK.

This sequence belongs to the universal ribosomal protein uS13 family. Part of the 30S ribosomal subunit. Forms a loose heterodimer with protein S19. Forms two bridges to the 50S subunit in the 70S ribosome.

Its function is as follows. Located at the top of the head of the 30S subunit, it contacts several helices of the 16S rRNA. In the 70S ribosome it contacts the 23S rRNA (bridge B1a) and protein L5 of the 50S subunit (bridge B1b), connecting the 2 subunits; these bridges are implicated in subunit movement. Contacts the tRNAs in the A and P-sites. The chain is Small ribosomal subunit protein uS13 from Bartonella quintana (strain Toulouse) (Rochalimaea quintana).